We begin with the raw amino-acid sequence, 248 residues long: UPF0273 protein APE_1505.1 (248 aa).

The KaiC domain occupies 3–247; it reads DRVKTGIPGM…VVRIGRRVSI (245 aa). 30–37 serves as a coordination point for ATP; it reads GGPGTGKS.

The protein belongs to the UPF0273 family.

The sequence is that of UPF0273 protein APE_1505.1 from Aeropyrum pernix (strain ATCC 700893 / DSM 11879 / JCM 9820 / NBRC 100138 / K1).